A 128-amino-acid polypeptide reads, in one-letter code: Ribosome-binding factor A (128 aa).

The protein belongs to the RbfA family. In terms of assembly, monomer. Binds 30S ribosomal subunits, but not 50S ribosomal subunits or 70S ribosomes.

It is found in the cytoplasm. One of several proteins that assist in the late maturation steps of the functional core of the 30S ribosomal subunit. Associates with free 30S ribosomal subunits (but not with 30S subunits that are part of 70S ribosomes or polysomes). Required for efficient processing of 16S rRNA. May interact with the 5'-terminal helix region of 16S rRNA. In Herminiimonas arsenicoxydans, this protein is Ribosome-binding factor A.